A 469-amino-acid polypeptide reads, in one-letter code: Solute carrier family 52, riboflavin transporter, member 3 (469 aa).

The Cytoplasmic segment spans residues 1-2; that stretch reads MA. Residues 3–23 traverse the membrane as a helical segment; it reads FLMHLLVCVFGMGSWVTINGL. Residues 24–43 are Extracellular-facing; it reads WVELPLLVMELPEGWYLPSY. A helical transmembrane segment spans residues 44-64; sequence LTVVIQLANIGPLLVTLLHHF. Over 65–71 the chain is Cytoplasmic; that stretch reads RPSCLSE. The helical transmembrane segment at 72–92 threads the bilayer; sequence VPIIFTLLGVGTVTCIIFAFL. The Extracellular segment spans residues 93–97; that stretch reads WNMTS. Asn94 carries N-linked (GlcNAc...) asparagine glycosylation. A helical membrane pass occupies residues 98 to 118; that stretch reads WVLDGHHSIAFLVLTFFLALV. The Cytoplasmic portion of the chain corresponds to 119 to 137; sequence DCTSSVTFLPFMSRLPTYY. The helical transmembrane segment at 138–158 threads the bilayer; the sequence is LTTFFVGEGLSGLLPALVALA. At 159 to 220 the chain is on the extracellular side; that stretch reads QGSGLTTCVN…SRYLPAHFSP (62 aa). N-linked (GlcNAc...) asparagine glycosylation is present at Asn168. A helical transmembrane segment spans residues 221-241; that stretch reads LVFFLLLSIMMACCLVAFFVL. Over 242–292 the chain is Cytoplasmic; sequence QRQPRCWEASVEDLLNDQVTLHSIRPREENDLGPAGTVDSSQGQGYLEEKA. Ser251 is modified (phosphoserine). The helical transmembrane segment at 293–313 threads the bilayer; it reads APCCPAHLAFIYTLVAFVNAL. The Extracellular portion of the chain corresponds to 314–335; sequence TNGMLPSVQTYSCLSYGPVAYH. A helical membrane pass occupies residues 336-356; sequence LAATLSIVANPLASLVSMFLP. Residues 357-359 lie on the Cytoplasmic side of the membrane; the sequence is NRS. Residues 360–380 form a helical membrane-spanning segment; sequence LLFLGVLSVLGTCFGGYNMAM. Topologically, residues 381–396 are extracellular; the sequence is AVMSPCPLLQGHWGGE. Residues Cys386 and Cys463 are joined by a disulfide bond. A helical transmembrane segment spans residues 397–417; it reads VLIVASWVLFSGCLSYVKVML. At 418 to 427 the chain is on the cytoplasmic side; that stretch reads GVVLRDLSRS. A helical membrane pass occupies residues 428–448; sequence ALLWCGAAVQLGSLLGALLMF. Topologically, residues 449–469 are extracellular; the sequence is PLVNVLRLFSSADFCNLHCPA.

The protein belongs to the riboflavin transporter family. In terms of tissue distribution, predominantly expressed in testis. Highly expressed in small intestine and prostate.

It localises to the apical cell membrane. The protein resides in the cell membrane. The protein localises to the nucleus membrane. Its subcellular location is the cytoplasm. The enzyme catalyses riboflavin(in) = riboflavin(out). Its activity is regulated as follows. Activity is strongly inhibited by riboflavin analogs, such as lumiflavin, flavin mononucleotide (FMN), flavin adenine dinucleotide (FAD), by methylene blue, and to a lesser extent by amiloride. Riboflavin transport is Na(+)-independent at low pH but significantly reduced by Na(+) depletion under neutral pH conditions. Its function is as follows. Plasma membrane transporter mediating the uptake by cells of the water soluble vitamin B2/riboflavin that plays a key role in biochemical oxidation-reduction reactions of the carbohydrate, lipid, and amino acid metabolism. Humans are unable to synthesize vitamin B2/riboflavin and must obtain it via intestinal absorption. This Homo sapiens (Human) protein is Solute carrier family 52, riboflavin transporter, member 3 (SLC52A3).